The chain runs to 228 residues: UPF0758 protein CTC_02075 (228 aa).

One can recognise an MPN domain in the interval 106 to 228 (NITNPKDAAY…YISLKEKDIL (123 aa)). Zn(2+)-binding residues include His-177, His-179, and Asp-190. A JAMM motif motif is present at residues 177–190 (HNHPSGDTTPSKED).

The protein belongs to the UPF0758 family.

In Clostridium tetani (strain Massachusetts / E88), this protein is UPF0758 protein CTC_02075.